The chain runs to 379 residues: 8-amino-7-oxononanoate synthase (379 aa).

Residues Arg-27 and Arg-34 each coordinate substrate. Residue 114–115 (GY) participates in pyridoxal 5'-phosphate binding. Position 139 (His-139) interacts with substrate. Pyridoxal 5'-phosphate contacts are provided by residues Ser-187, 212-215 (DDAH), and 232-235 (TLSK). Residue Lys-235 is modified to N6-(pyridoxal phosphate)lysine. Thr-344 is a substrate binding site.

It belongs to the class-II pyridoxal-phosphate-dependent aminotransferase family. BioF subfamily. In terms of assembly, homodimer. The cofactor is pyridoxal 5'-phosphate.

The enzyme catalyses 6-carboxyhexanoyl-[ACP] + L-alanine + H(+) = (8S)-8-amino-7-oxononanoate + holo-[ACP] + CO2. It functions in the pathway cofactor biosynthesis; biotin biosynthesis. In terms of biological role, catalyzes the decarboxylative condensation of pimeloyl-[acyl-carrier protein] and L-alanine to produce 8-amino-7-oxononanoate (AON), [acyl-carrier protein], and carbon dioxide. The sequence is that of 8-amino-7-oxononanoate synthase from Methylobacterium nodulans (strain LMG 21967 / CNCM I-2342 / ORS 2060).